The following is a 545-amino-acid chain: Chaperonin GroEL (545 aa).

ATP is bound by residues 30–33, Lys-51, 87–91, Gly-415, and Asp-496; these read TLGP and DGTTT.

This sequence belongs to the chaperonin (HSP60) family. Forms a cylinder of 14 subunits composed of two heptameric rings stacked back-to-back. Interacts with the co-chaperonin GroES.

It is found in the cytoplasm. The catalysed reaction is ATP + H2O + a folded polypeptide = ADP + phosphate + an unfolded polypeptide.. Its function is as follows. Together with its co-chaperonin GroES, plays an essential role in assisting protein folding. The GroEL-GroES system forms a nano-cage that allows encapsulation of the non-native substrate proteins and provides a physical environment optimized to promote and accelerate protein folding. The chain is Chaperonin GroEL from Rhodobacter capsulatus (Rhodopseudomonas capsulata).